Here is a 330-residue protein sequence, read N- to C-terminus: MLSKQRVVITSGEPAGIGPDLVVQLAQQDWPVELVVCADPELLRDRAAVLRLPLTLREYQPGTDAQPQQAGSLTVLPAHLAQPVNAGELCVDNSHYVLETLARACDGCLSGEFAALITGPVHKGAINDAGIPFSGHTEFFAERARCERVVMMLATEELRVALATTHLPLKDVAASITRTTLHEVITILYQDLQSKFGRAEPHIFVCGLNPHAGEGGHMGREEIDVIIPALDELRQQGMKLTGPLPADTLFQPKYLQHADAVLAMYHDQGLPVLKYQGFGRAVNITLGLPFIRTSVDHGTALELAGSGQADAGSFKTALNLAITMIKSSNE.

Residues H136 and T137 each contribute to the substrate site. 3 residues coordinate a divalent metal cation: H166, H211, and H266. Residues K274, N283, and R292 each contribute to the substrate site.

The protein belongs to the PdxA family. Homodimer. The cofactor is Zn(2+). It depends on Mg(2+) as a cofactor. Co(2+) is required as a cofactor.

It localises to the cytoplasm. It carries out the reaction 4-(phosphooxy)-L-threonine + NAD(+) = 3-amino-2-oxopropyl phosphate + CO2 + NADH. It participates in cofactor biosynthesis; pyridoxine 5'-phosphate biosynthesis; pyridoxine 5'-phosphate from D-erythrose 4-phosphate: step 4/5. Catalyzes the NAD(P)-dependent oxidation of 4-(phosphooxy)-L-threonine (HTP) into 2-amino-3-oxo-4-(phosphooxy)butyric acid which spontaneously decarboxylates to form 3-amino-2-oxopropyl phosphate (AHAP). The sequence is that of 4-hydroxythreonine-4-phosphate dehydrogenase from Erwinia tasmaniensis (strain DSM 17950 / CFBP 7177 / CIP 109463 / NCPPB 4357 / Et1/99).